The following is a 255-amino-acid chain: Hydroxyacylglutathione hydrolase (255 aa).

7 residues coordinate Zn(2+): His-55, His-57, Asp-59, His-60, His-112, Asp-129, and His-167.

This sequence belongs to the metallo-beta-lactamase superfamily. Glyoxalase II family. Monomer. The cofactor is Zn(2+).

The catalysed reaction is an S-(2-hydroxyacyl)glutathione + H2O = a 2-hydroxy carboxylate + glutathione + H(+). The protein operates within secondary metabolite metabolism; methylglyoxal degradation; (R)-lactate from methylglyoxal: step 2/2. Its function is as follows. Thiolesterase that catalyzes the hydrolysis of S-D-lactoyl-glutathione to form glutathione and D-lactic acid. In Halorhodospira halophila (strain DSM 244 / SL1) (Ectothiorhodospira halophila (strain DSM 244 / SL1)), this protein is Hydroxyacylglutathione hydrolase.